A 256-amino-acid polypeptide reads, in one-letter code: 1-(5-phosphoribosyl)-5-[(5-phosphoribosylamino)methylideneamino] imidazole-4-carboxamide isomerase (256 aa).

Residue Asp8 is the Proton acceptor of the active site. The active-site Proton donor is Asp129.

This sequence belongs to the HisA/HisF family.

The protein localises to the cytoplasm. The catalysed reaction is 1-(5-phospho-beta-D-ribosyl)-5-[(5-phospho-beta-D-ribosylamino)methylideneamino]imidazole-4-carboxamide = 5-[(5-phospho-1-deoxy-D-ribulos-1-ylimino)methylamino]-1-(5-phospho-beta-D-ribosyl)imidazole-4-carboxamide. It functions in the pathway amino-acid biosynthesis; L-histidine biosynthesis; L-histidine from 5-phospho-alpha-D-ribose 1-diphosphate: step 4/9. The polypeptide is 1-(5-phosphoribosyl)-5-[(5-phosphoribosylamino)methylideneamino] imidazole-4-carboxamide isomerase (Synechococcus sp. (strain CC9311)).